We begin with the raw amino-acid sequence, 133 residues long: Small ribosomal subunit protein uS8 (133 aa).

The protein belongs to the universal ribosomal protein uS8 family. As to quaternary structure, part of the 30S ribosomal subunit. Contacts proteins S5 and S12.

Functionally, one of the primary rRNA binding proteins, it binds directly to 16S rRNA central domain where it helps coordinate assembly of the platform of the 30S subunit. The sequence is that of Small ribosomal subunit protein uS8 from Chlamydia abortus (strain DSM 27085 / S26/3) (Chlamydophila abortus).